Consider the following 124-residue polypeptide: Peptidyl-tRNA hydrolase (124 aa).

The protein belongs to the PTH2 family.

The protein resides in the cytoplasm. It catalyses the reaction an N-acyl-L-alpha-aminoacyl-tRNA + H2O = an N-acyl-L-amino acid + a tRNA + H(+). Its function is as follows. The natural substrate for this enzyme may be peptidyl-tRNAs which drop off the ribosome during protein synthesis. This chain is Peptidyl-tRNA hydrolase, found in Aeropyrum pernix (strain ATCC 700893 / DSM 11879 / JCM 9820 / NBRC 100138 / K1).